The primary structure comprises 67 residues: Sec-independent protein translocase protein TatA (67 aa).

Residues M1–G21 traverse the membrane as a helical segment.

It belongs to the TatA/E family. As to quaternary structure, the Tat system comprises two distinct complexes: a TatABC complex, containing multiple copies of TatA, TatB and TatC subunits, and a separate TatA complex, containing only TatA subunits. Substrates initially bind to the TatABC complex, which probably triggers association of the separate TatA complex to form the active translocon.

The protein resides in the cell inner membrane. Functionally, part of the twin-arginine translocation (Tat) system that transports large folded proteins containing a characteristic twin-arginine motif in their signal peptide across membranes. TatA could form the protein-conducting channel of the Tat system. The chain is Sec-independent protein translocase protein TatA from Ruthia magnifica subsp. Calyptogena magnifica.